We begin with the raw amino-acid sequence, 141 residues long: Large ribosomal subunit protein uL11 (141 aa).

The protein belongs to the universal ribosomal protein uL11 family. Part of the ribosomal stalk of the 50S ribosomal subunit. Interacts with L10 and the large rRNA to form the base of the stalk. L10 forms an elongated spine to which L12 dimers bind in a sequential fashion forming a multimeric L10(L12)X complex. Post-translationally, one or more lysine residues are methylated.

Functionally, forms part of the ribosomal stalk which helps the ribosome interact with GTP-bound translation factors. This chain is Large ribosomal subunit protein uL11, found in Prochlorococcus marinus subsp. pastoris (strain CCMP1986 / NIES-2087 / MED4).